The primary structure comprises 213 residues: Protein ras-1 (213 aa).

GTP is bound at residue 15–22 (GGGGVGKS). The Effector region signature appears at 37–45 (YDPTIEDSY). GTP-binding positions include 62 to 66 (DTAGQ) and 121 to 124 (NKYD). The residue at position 210 (cysteine 210) is a Cysteine methyl ester. A lipid anchor (S-farnesyl cysteine) is attached at cysteine 210. A propeptide spans 211–213 (IMM) (removed in mature form).

This sequence belongs to the small GTPase superfamily. Ras family.

It localises to the cell membrane. The catalysed reaction is GTP + H2O = GDP + phosphate + H(+). In terms of biological role, ras proteins bind GDP/GTP and possess intrinsic GTPase activity. This is Protein ras-1 (ras-1) from Neurospora crassa (strain ATCC 24698 / 74-OR23-1A / CBS 708.71 / DSM 1257 / FGSC 987).